We begin with the raw amino-acid sequence, 868 residues long: Alanine--tRNA ligase (868 aa).

Positions 555, 559, 657, and 661 each coordinate Zn(2+). The interval 828 to 847 (SQVGGKGGGRPDMAQAGGSE) is disordered.

Belongs to the class-II aminoacyl-tRNA synthetase family. The cofactor is Zn(2+).

It localises to the cytoplasm. The catalysed reaction is tRNA(Ala) + L-alanine + ATP = L-alanyl-tRNA(Ala) + AMP + diphosphate. In terms of biological role, catalyzes the attachment of alanine to tRNA(Ala) in a two-step reaction: alanine is first activated by ATP to form Ala-AMP and then transferred to the acceptor end of tRNA(Ala). Also edits incorrectly charged Ser-tRNA(Ala) and Gly-tRNA(Ala) via its editing domain. The protein is Alanine--tRNA ligase of Pseudoalteromonas translucida (strain TAC 125).